Consider the following 241-residue polypeptide: MAQHGAMGAFRALCGLALLCALSLGQRPTGGPGCGPGRLLLGTGTDARCCRVHTTRCCRDYPGEECCSEWDCMCVQPEFHCGDPCCTTCRHHPCPPGQGVQSQGKFSFGFQCIDCASGTFSGGHEGHCKPWTDCTQFGFLTVFPGNKTHNAVCVPGSPPAEPLGWLTVVLLAVAACVLLLTSAQLGLHIWQLRSQCMWPRETQLLLEVPPSTEDARSCQFPEEERGERSAEEKGRLGDLWV.

The first 25 residues, M1–G25, serve as a signal peptide directing secretion. The Extracellular portion of the chain corresponds to Q26–P162. Intrachain disulfides connect C34/C49, C74/C86, C81/C94, C115/C134, and C128/C153. TNFR-Cys repeat units lie at residues C34 to C72, C74 to C112, and C115 to C153. N-linked (GlcNAc...) asparagine glycosylation is present at N146. The chain crosses the membrane as a helical span at residues L163–A183. At Q184 to V241 the chain is on the cytoplasmic side. Positions D214–V241 are disordered. Basic and acidic residues predominate over residues E222–V241.

Binds to TRAF1, TRAF2, and TRAF3, but not TRAF5 and TRAF6. Binds through its C-terminus to SIVA1/SIVA. In terms of tissue distribution, expressed in lymph node, peripheral blood leukocytes and weakly in spleen.

The protein localises to the cell membrane. It localises to the secreted. Functionally, receptor for TNFSF18. Seems to be involved in interactions between activated T-lymphocytes and endothelial cells and in the regulation of T-cell receptor-mediated cell death. Mediated NF-kappa-B activation via the TRAF2/NIK pathway. The sequence is that of Tumor necrosis factor receptor superfamily member 18 (TNFRSF18) from Homo sapiens (Human).